Here is a 349-residue protein sequence, read N- to C-terminus: Protein pelota homolog (349 aa).

The protein belongs to the eukaryotic release factor 1 family. Pelota subfamily. Monomer. A divalent metal cation is required as a cofactor.

The protein localises to the cytoplasm. Its function is as follows. May function in recognizing stalled ribosomes, interact with stem-loop structures in stalled mRNA molecules, and effect endonucleolytic cleavage of the mRNA. May play a role in the release non-functional ribosomes and degradation of damaged mRNAs. Has endoribonuclease activity. The chain is Protein pelota homolog from Nitrosopumilus maritimus (strain SCM1).